The primary structure comprises 204 residues: MPIEIPTDLTPELVPLSWLIGEWEGSGRLGAGEEDSEHFSQHVSFTHNGLPYLQYRAESWLTDDEGTRLRPLTVETGFWALERKQREEDGGPGLIPADIVPVLKSADEVEALRNSDGGFDISVSISHPGGISELYYGQIKGPQIQLSTDMVMRGSHSKEYTAATRIFGLVDGKLLWRWDVATGAGSTQGGGLEAHASAILSKIS.

Positions 21–27 (GEWEGSG) match the GXWXGXG motif. Histidine 195 provides a ligand contact to heme b.

This sequence belongs to the nitrobindin family. As to quaternary structure, homodimer. Requires heme b as cofactor.

The enzyme catalyses peroxynitrite = nitrate. The protein operates within nitrogen metabolism. Functionally, heme-binding protein able to scavenge peroxynitrite and to protect free L-tyrosine against peroxynitrite-mediated nitration, by acting as a peroxynitrite isomerase that converts peroxynitrite to nitrate. Therefore, this protein likely plays a role in peroxynitrite sensing and in the detoxification of reactive nitrogen and oxygen species (RNS and ROS, respectively). Is able to bind nitric oxide (NO) in vitro, but may act as a sensor of peroxynitrite levels in vivo. This Arthrobacter sp. (strain FB24) protein is Peroxynitrite isomerase.